A 393-amino-acid chain; its full sequence is Phosphoglycerate kinase (393 aa).

Substrate-binding positions include aspartate 21–asparagine 23, arginine 36, histidine 59–arginine 62, arginine 114, and arginine 147. Residues lysine 198, glutamate 314, and glycine 340–threonine 343 each bind ATP.

It belongs to the phosphoglycerate kinase family. As to quaternary structure, monomer.

The protein resides in the cytoplasm. It carries out the reaction (2R)-3-phosphoglycerate + ATP = (2R)-3-phospho-glyceroyl phosphate + ADP. Its pathway is carbohydrate degradation; glycolysis; pyruvate from D-glyceraldehyde 3-phosphate: step 2/5. The chain is Phosphoglycerate kinase from Buchnera aphidicola subsp. Baizongia pistaciae (strain Bp).